The primary structure comprises 446 residues: tRNA (guanine-N(7)-)-methyltransferase non-catalytic subunit TRM82 (446 aa).

The tract at residues 67-97 (LTQTSEDTEQENTAPYKKQKSSVSKPIKVPK) is disordered. A compositionally biased stretch (low complexity) spans 87 to 97 (SSVSKPIKVPK). 3 WD repeats span residues 107-147 (PIYN…TENC), 202-243 (GHVS…IVKH), and 247-287 (GHRE…LLSK).

It belongs to the WD repeat TRM82 family. In terms of assembly, forms a heterodimer with the catalytic subunit TRM8.

The protein resides in the nucleus. It functions in the pathway tRNA modification; N(7)-methylguanine-tRNA biosynthesis. Functionally, required for the formation of N(7)-methylguanine at position 46 (m7G46) in tRNA. In the complex, it is required to stabilize and induce conformational changes of the catalytic subunit. The chain is tRNA (guanine-N(7)-)-methyltransferase non-catalytic subunit TRM82 from Debaryomyces hansenii (strain ATCC 36239 / CBS 767 / BCRC 21394 / JCM 1990 / NBRC 0083 / IGC 2968) (Yeast).